The sequence spans 317 residues: L-lactate dehydrogenase (317 aa).

NAD(+) contacts are provided by residues Val17, Asp38, Lys43, Tyr69, and 83–84 (GA). Substrate contacts are provided by Gln86 and Arg92. Residues Ser105, 122–124 (ATN), and Ser147 each bind NAD(+). 124-127 (NPVD) is a binding site for substrate. Position 152–155 (152–155 (DTAR)) interacts with substrate. Residues Arg157 and His172 each coordinate beta-D-fructose 1,6-bisphosphate. His179 acts as the Proton acceptor in catalysis. Tyr224 carries the post-translational modification Phosphotyrosine. Thr233 serves as a coordination point for substrate.

It belongs to the LDH/MDH superfamily. LDH family. As to quaternary structure, homotetramer.

Its subcellular location is the cytoplasm. The catalysed reaction is (S)-lactate + NAD(+) = pyruvate + NADH + H(+). Its pathway is fermentation; pyruvate fermentation to lactate; (S)-lactate from pyruvate: step 1/1. Its activity is regulated as follows. Allosterically activated by fructose 1,6-bisphosphate (FBP). Catalyzes the conversion of lactate to pyruvate. In Geobacillus thermodenitrificans (strain NG80-2), this protein is L-lactate dehydrogenase.